Here is a 226-residue protein sequence, read N- to C-terminus: Triosephosphate isomerase (226 aa).

13-15 (NFK) is a substrate binding site. H97 (electrophile) is an active-site residue. The active-site Proton acceptor is E145. Residues I150, G185, and 206–207 (AS) contribute to the substrate site.

It belongs to the triosephosphate isomerase family. Homotetramer; dimer of dimers.

The protein localises to the cytoplasm. It catalyses the reaction D-glyceraldehyde 3-phosphate = dihydroxyacetone phosphate. The protein operates within carbohydrate biosynthesis; gluconeogenesis. Its pathway is carbohydrate degradation; glycolysis; D-glyceraldehyde 3-phosphate from glycerone phosphate: step 1/1. Its function is as follows. Involved in the gluconeogenesis. Catalyzes stereospecifically the conversion of dihydroxyacetone phosphate (DHAP) to D-glyceraldehyde-3-phosphate (G3P). This is Triosephosphate isomerase from Methanobacterium bryantii.